Reading from the N-terminus, the 374-residue chain is Chaperone protein DnaJ (374 aa).

The J domain maps to 5–70 (CYYEILNVSK…GKRSRYDQFG (66 aa)). The segment at 130-207 (GVEKEINIPR…CYGSGKIKKQ (78 aa)) adopts a CR-type zinc-finger fold. 8 residues coordinate Zn(2+): C143, C146, C159, C162, C181, C184, C195, and C198. 4 CXXCXGXG motif repeats span residues 143–150 (CDSCDGTG), 159–166 (CHACHGQG), 181–188 (CPVCNGTG), and 195–202 (CDDCYGSG).

This sequence belongs to the DnaJ family. In terms of assembly, homodimer. Requires Zn(2+) as cofactor.

It is found in the cytoplasm. Its function is as follows. Participates actively in the response to hyperosmotic and heat shock by preventing the aggregation of stress-denatured proteins and by disaggregating proteins, also in an autonomous, DnaK-independent fashion. Unfolded proteins bind initially to DnaJ; upon interaction with the DnaJ-bound protein, DnaK hydrolyzes its bound ATP, resulting in the formation of a stable complex. GrpE releases ADP from DnaK; ATP binding to DnaK triggers the release of the substrate protein, thus completing the reaction cycle. Several rounds of ATP-dependent interactions between DnaJ, DnaK and GrpE are required for fully efficient folding. Also involved, together with DnaK and GrpE, in the DNA replication of plasmids through activation of initiation proteins. This is Chaperone protein DnaJ from Francisella philomiragia subsp. philomiragia (strain ATCC 25017 / CCUG 19701 / FSC 153 / O#319-036).